Reading from the N-terminus, the 156-residue chain is Ribosomal RNA large subunit methyltransferase H (156 aa).

S-adenosyl-L-methionine contacts are provided by residues Leu-73, Gly-104, and 123 to 128; that span reads LSPLTL.

This sequence belongs to the RNA methyltransferase RlmH family. In terms of assembly, homodimer.

It localises to the cytoplasm. It carries out the reaction pseudouridine(1915) in 23S rRNA + S-adenosyl-L-methionine = N(3)-methylpseudouridine(1915) in 23S rRNA + S-adenosyl-L-homocysteine + H(+). In terms of biological role, specifically methylates the pseudouridine at position 1915 (m3Psi1915) in 23S rRNA. The chain is Ribosomal RNA large subunit methyltransferase H from Aliivibrio fischeri (strain MJ11) (Vibrio fischeri).